We begin with the raw amino-acid sequence, 516 residues long: NAD(P)H-quinone oxidoreductase chain 4, chloroplastic (516 aa).

14 helical membrane-spanning segments follow: residues 4–24, 37–57, 87–107, 111–131, 134–154, 167–187, 208–228, 242–262, 272–292, 305–325, 330–350, 386–406, 416–436, and 462–482; these read FPWL…IFLL, LCIC…HFQL, IGPI…AWPV, AQLF…SFSS, LLLF…LLSM, FILY…GIGL, ALEV…LPII, HYST…YGLV, AHCL…IYAA, IAYS…SLSD, GAIL…FLAG, LALP…GIIT, ILIA…SLSM, and LFVS…PDFV.

Belongs to the complex I subunit 4 family.

The protein localises to the plastid. It localises to the chloroplast thylakoid membrane. The catalysed reaction is a plastoquinone + NADH + (n+1) H(+)(in) = a plastoquinol + NAD(+) + n H(+)(out). It carries out the reaction a plastoquinone + NADPH + (n+1) H(+)(in) = a plastoquinol + NADP(+) + n H(+)(out). This Oenothera argillicola (Appalachian evening primrose) protein is NAD(P)H-quinone oxidoreductase chain 4, chloroplastic.